The primary structure comprises 972 residues: MERMNWLSRLASRGPGHRIPQGANLQTPVMADPETCLMVFKNHWSQVVRILERQGPRAAPGGADDLSAVRNHTYQMLTLLAEDRAVPSAPTGPGPLLEFALHEDLLTRVLTWQLQWDELGDGVEERRAEQLKLFEMLVSEARQPLLRHGPVREALLTLLDACGRPVPSSPALDEGLVLLLSQLCVCVAQEPSLLEFFLQPPPEPGAAPRLLLFSRLVPFVHREGTLGQQARDALLLLMALSAGSPTVGRYIADHSYFCPVLATGLSALYSSLPRKIEVPGDDWHCLRREDWLGVPALALFMSSLEFCNAVIQVAHPLVQKQLVDYIHNGFLVPVMGPALHKTSVEEMIASTAYLELFLRSISEPALLRTFLRFLLLHRHDTHTILDTLVARIGSNSRLCMVSLSLFRTLLNLSCEDVLLQLVLRYLVPCNHVMLSQKPAVRDVDLYGRAADKFLSLIPRCCRHHAPSPPRPEHASWARGPGSPSVDSSSVTTVPRPSTPSRLALFLRQQSLGGSESPGPAPCSPGLSASPASSPGRRPTPAEEPGELEDNYLEYLREARRGVDRCVRACRTWSAPYDGERPSPEPSPFGSRTKKRSLLPEEDRNNVGEGEEEELGRRGRAGGAGEGPGHLPPPQLNGVPGSWPEGAKKVRLVPKEGAGELLEGISEGMAGLEGFGQELRELEVALSNGGTGSESPLEPPLPLEEEEAYESFTCPPEPPGPFLSSPLRTLNQLPSQPFTGPFMAVLFAKLENMLQNSVYVNFLLTGLVAQLACHPQPLLRSFLLNTNMVFQPSVKSLLQVLGSVKNKIENFAASQEDFPALLSKAKKYLIARGKLDWAEGPAAGPAPRRSDPLVKSRRPSLGELLLRHAHSPTRARQAAQLVLQPGRDGAGLGLSGGSPGASTPVLLTRGGAPERQGEALRVKNAVYCAVIFPEFLKELAAISQAHAVTSPFLLETSEEGSGPLISGCGPLNP.

2 disordered regions span residues 465–548 (APSP…GELE) and 573–644 (SAPY…SWPE). Ser467 bears the Phosphoserine mark. Residues 478-501 (RGPGSPSVDSSSVTTVPRPSTPSR) show a composition bias toward low complexity. Phosphoserine is present on residues Ser510, Ser523, Ser529, and Ser533. The span at 523–535 (SPGLSASPASSPG) shows a compositional bias: low complexity. Ser859 and Ser897 each carry phosphoserine.

The protein belongs to the FHIP family. Component of the FTS/Hook/FHIP complex (FHF complex), composed of AKTIP/FTS, FHIP1B, and one or more members of the Hook family of proteins HOOK1, HOOK2, and HOOK3. The FHF complex associates with the homotypic vesicular sorting complex (the HOPS complex).

Its function is as follows. Component of the FTS/Hook/FHIP complex (FHF complex). The FHF complex may function to promote vesicle trafficking and/or fusion via the homotypic vesicular protein sorting complex (the HOPS complex). FHF complex promotes the distribution of AP-4 complex to the perinuclear area of the cell. This is FHF complex subunit HOOK-interacting protein 1B from Homo sapiens (Human).